The chain runs to 869 residues: Aconitate hydratase A (869 aa).

Positions 411, 477, and 480 each coordinate [4Fe-4S] cluster.

It belongs to the aconitase/IPM isomerase family. As to quaternary structure, monomer. [4Fe-4S] cluster serves as cofactor.

It carries out the reaction citrate = D-threo-isocitrate. The catalysed reaction is (2S,3R)-3-hydroxybutane-1,2,3-tricarboxylate = 2-methyl-cis-aconitate + H2O. It participates in carbohydrate metabolism; tricarboxylic acid cycle; isocitrate from oxaloacetate: step 2/2. The protein operates within organic acid metabolism; propanoate degradation. Its function is as follows. Involved in the catabolism of short chain fatty acids (SCFA) via the tricarboxylic acid (TCA)(acetyl degradation route) and the 2-methylcitrate cycle I (propionate degradation route). Catalyzes the reversible isomerization of citrate to isocitrate via cis-aconitate. Could catalyze the hydration of 2-methyl-cis-aconitate to yield (2S,3R)-2-methylisocitrate. The apo form of AcnA functions as a RNA-binding regulatory protein. The chain is Aconitate hydratase A from Cupriavidus necator (Alcaligenes eutrophus).